A 416-amino-acid chain; its full sequence is Histidine--tRNA ligase (416 aa).

The protein belongs to the class-II aminoacyl-tRNA synthetase family. Homodimer.

It localises to the cytoplasm. The catalysed reaction is tRNA(His) + L-histidine + ATP = L-histidyl-tRNA(His) + AMP + diphosphate + H(+). The polypeptide is Histidine--tRNA ligase (Clostridium novyi (strain NT)).